A 499-amino-acid polypeptide reads, in one-letter code: Probable 2-isopropylmalate synthase (499 aa).

The Pyruvate carboxyltransferase domain occupies 5 to 256 (VRIFDTTLRD…ELDVRTEMLV (252 aa)). 4 residues coordinate a divalent metal cation: Asp14, His194, His196, and Asn230.

The protein belongs to the alpha-IPM synthase/homocitrate synthase family. As to quaternary structure, homodimer. A divalent metal cation serves as cofactor.

The enzyme catalyses 3-methyl-2-oxobutanoate + acetyl-CoA + H2O = (2S)-2-isopropylmalate + CoA + H(+). It functions in the pathway amino-acid biosynthesis; L-leucine biosynthesis; L-leucine from 3-methyl-2-oxobutanoate: step 1/4. Functionally, catalyzes the condensation of the acetyl group of acetyl-CoA with 3-methyl-2-oxobutanoate (2-oxoisovalerate) to form 3-carboxy-3-hydroxy-4-methylpentanoate (2-isopropylmalate). The sequence is that of Probable 2-isopropylmalate synthase (leuA) from Methanopyrus kandleri (strain AV19 / DSM 6324 / JCM 9639 / NBRC 100938).